The chain runs to 323 residues: Protein translocase subunit SecF (323 aa).

The next 6 helical transmembrane spans lie at 19 to 39, 138 to 158, 162 to 182, 189 to 209, 244 to 264, and 269 to 289; these read GVIV…FKGF, ILSL…RYEW, LASV…VIVF, EVIA…IIIF, LTVF…IIGF, and LIGT…VALL.

This sequence belongs to the SecD/SecF family. SecF subfamily. In terms of assembly, forms a complex with SecD. Part of the essential Sec protein translocation apparatus which comprises SecA, SecYEG and auxiliary proteins SecDF-YajC and YidC.

Its subcellular location is the cell inner membrane. In terms of biological role, part of the Sec protein translocase complex. Interacts with the SecYEG preprotein conducting channel. SecDF uses the proton motive force (PMF) to complete protein translocation after the ATP-dependent function of SecA. This is Protein translocase subunit SecF from Helicobacter pylori (strain ATCC 700392 / 26695) (Campylobacter pylori).